A 109-amino-acid polypeptide reads, in one-letter code: T cell receptor alpha variable 25 (109 aa).

An N-terminal signal peptide occupies residues 1–19; it reads MLLITSMLVLWMQLSQVNG. The 90-residue stretch at 20 to 109 folds into the Ig-like domain; sequence QQVMQIPQYQ…TDVGTYFCAG (90 aa). A disulfide bridge links C41 with C107. N-linked (GlcNAc...) asparagine glycans are attached at residues N42 and N89.

In terms of assembly, alpha-beta TR is a heterodimer composed of an alpha and beta chain; disulfide-linked. The alpha-beta TR is associated with the transmembrane signaling CD3 coreceptor proteins to form the TR-CD3 (TcR or TCR). The assembly of alpha-beta TR heterodimers with CD3 occurs in the endoplasmic reticulum where a single alpha-beta TR heterodimer associates with one CD3D-CD3E heterodimer, one CD3G-CD3E heterodimer and one CD247 homodimer forming a stable octameric structure. CD3D-CD3E and CD3G-CD3E heterodimers preferentially associate with TR alpha and TR beta chains, respectively. The association of the CD247 homodimer is the last step of TcR assembly in the endoplasmic reticulum and is required for transport to the cell surface.

Its subcellular location is the cell membrane. V region of the variable domain of T cell receptor (TR) alpha chain that participates in the antigen recognition. Alpha-beta T cell receptors are antigen specific receptors which are essential to the immune response and are present on the cell surface of T lymphocytes. Recognize peptide-major histocompatibility (MH) (pMH) complexes that are displayed by antigen presenting cells (APC), a prerequisite for efficient T cell adaptive immunity against pathogens. Binding of alpha-beta TR to pMH complex initiates TR-CD3 clustering on the cell surface and intracellular activation of LCK that phosphorylates the ITAM motifs of CD3G, CD3D, CD3E and CD247 enabling the recruitment of ZAP70. In turn ZAP70 phosphorylates LAT, which recruits numerous signaling molecules to form the LAT signalosome. The LAT signalosome propagates signal branching to three major signaling pathways, the calcium, the mitogen-activated protein kinase (MAPK) kinase and the nuclear factor NF-kappa-B (NF-kB) pathways, leading to the mobilization of transcription factors that are critical for gene expression and essential for T cell growth and differentiation. The T cell repertoire is generated in the thymus, by V-(D)-J rearrangement. This repertoire is then shaped by intrathymic selection events to generate a peripheral T cell pool of self-MH restricted, non-autoaggressive T cells. Post-thymic interaction of alpha-beta TR with the pMH complexes shapes TR structural and functional avidity. In Homo sapiens (Human), this protein is T cell receptor alpha variable 25.